The chain runs to 249 residues: Acidic leucine-rich nuclear phosphoprotein 32 family member A (249 aa).

Thr-15 bears the Phosphothreonine mark. Phosphoserine is present on Ser-17. 4 LRR repeats span residues 18–38, 43–64, 65–87, and 89–110; these read DVKE…EGLT, ELEF…PKLN, KLKK…AEKC, and NLTH…EPLK. The region spanning 123–161 is the LRRCT domain; the sequence is CEVTNLNDYRENVFKLLPQLTYLDGYDRDDKEAPDSDAE. A compositionally biased stretch (basic and acidic residues) spans 147-156; that stretch reads GYDRDDKEAP. The segment at 147 to 249 is disordered; sequence GYDRDDKEAP…EPEDEGEDDD (103 aa). A necessary for tumor-suppressive function region spans residues 150–174; it reads RDDKEAPDSDAEGYVEGLDDEEEDE. The span at 157–230 shows a compositional bias: acidic residues; it reads DSDAEGYVEG…DEEDEEELGE (74 aa). Phosphoserine; by CK2 occurs at positions 158 and 204. The tract at residues 165 to 249 is interaction with E4F1; sequence EGLDDEEEDE…EPEDEGEDDD (85 aa).

It belongs to the ANP32 family. As to quaternary structure, component of the SET complex, composed of at least ANP32A, APEX1, HMGB2, NME1, SET and TREX1. Directly interacts with SET. Interacts with ATXN1/SCA1. Interacts with MAP1B. Interacts with ELAVL1. Part of the INHAT (inhibitor of histone acetyltransferases) complex. Interacts with E4F1. In terms of assembly, (Microbial infection) Interacts (via C-terminus) with influenza virus A protein PB2; this interaction promotes viral replication. (Microbial infection) Interacts (via C-terminus) with influenza virus B protein PB2; this interaction promotes viral replication. As to quaternary structure, (Microbial infection) Interacts (via C-terminus) with influenza virus C protein PB2; this interaction promotes viral replication by bridging viral replicase dimers together. Post-translationally, phosphorylated on serine residues, at least in part by casein kinase 2/CK2. In terms of processing, the N-terminus is blocked. Some glutamate residues are glycylated by TTLL8. This modification occurs exclusively on glutamate residues and results in a glycine chain on the gamma-carboxyl group. As to expression, expressed in all tissues tested. Highly expressed in kidney and skeletal muscle, moderate levels of expression in brain, placenta and pancreas, and weakly expressed in lung. Found in all regions of the brain examined (amygdala, caudate nucleus, corpus callosum, hippocampus and thalamus), with highest levels in amygdala.

It localises to the nucleus. Its subcellular location is the cytoplasm. The protein resides in the endoplasmic reticulum. In terms of biological role, multifunctional protein that is involved in the regulation of many processes including tumor suppression, apoptosis, cell cycle progression or transcription. Promotes apoptosis by favouring the activation of caspase-9/CASP9 and allowing apoptosome formation. In addition, plays a role in the modulation of histone acetylation and transcription as part of the INHAT (inhibitor of histone acetyltransferases) complex. Inhibits the histone-acetyltranferase activity of EP300/CREBBP (CREB-binding protein) and EP300/CREBBP-associated factor by histone masking. Preferentially binds to unmodified histone H3 and sterically inhibiting its acetylation and phosphorylation leading to cell growth inhibition. Participates in other biochemical processes such as regulation of mRNA nuclear-to-cytoplasmic translocation and stability by its association with ELAVL1 (Hu-antigen R). Plays a role in E4F1-mediated transcriptional repression as well as inhibition of protein phosphatase 2A. Functionally, (Microbial infection) Plays an essential role in influenza A, B and C viral genome replication. Mechanistically, mediates the assembly of the viral replicase asymmetric dimers composed of PB1, PB2 and PA via its N-terminal region. Also plays an essential role in foamy virus mRNA export from the nucleus. The polypeptide is Acidic leucine-rich nuclear phosphoprotein 32 family member A (ANP32A) (Homo sapiens (Human)).